Reading from the N-terminus, the 195-residue chain is Imidazoleglycerol-phosphate dehydratase (195 aa).

This sequence belongs to the imidazoleglycerol-phosphate dehydratase family.

Its subcellular location is the cytoplasm. It catalyses the reaction D-erythro-1-(imidazol-4-yl)glycerol 3-phosphate = 3-(imidazol-4-yl)-2-oxopropyl phosphate + H2O. Its pathway is amino-acid biosynthesis; L-histidine biosynthesis; L-histidine from 5-phospho-alpha-D-ribose 1-diphosphate: step 6/9. The polypeptide is Imidazoleglycerol-phosphate dehydratase (Burkholderia mallei (strain NCTC 10247)).